Reading from the N-terminus, the 74-residue chain is Conotoxin Vc6.11 (74 aa).

The first 19 residues, 1–19 (MEKLTILLLVAAVLMSTQA), serve as a signal peptide directing secretion. Positions 20–41 (LIQEQRQKAKINLFSKRKPSAE) are excised as a propeptide. Intrachain disulfides connect cysteine 55-cysteine 66 and cysteine 61-cysteine 71.

This sequence belongs to the conotoxin O2 superfamily. Expressed by the venom duct.

Its subcellular location is the secreted. Its function is as follows. Inhibits voltage-gated ion channels. This Conus victoriae (Queen Victoria cone) protein is Conotoxin Vc6.11.